Here is a 234-residue protein sequence, read N- to C-terminus: (5-formylfuran-3-yl)methyl phosphate synthase (234 aa).

Catalysis depends on K27, which acts as the Schiff-base intermediate with substrate. K85 serves as the catalytic Proton acceptor.

This sequence belongs to the MfnB family.

The catalysed reaction is 2 D-glyceraldehyde 3-phosphate = 4-(hydroxymethyl)-2-furancarboxaldehyde phosphate + phosphate + 2 H2O. The protein operates within cofactor biosynthesis; methanofuran biosynthesis. In terms of biological role, catalyzes the formation of 4-(hydroxymethyl)-2-furancarboxaldehyde phosphate (4-HFC-P) from two molecules of glyceraldehyde-3-P (GA-3-P). The polypeptide is (5-formylfuran-3-yl)methyl phosphate synthase (Methanosarcina mazei (strain ATCC BAA-159 / DSM 3647 / Goe1 / Go1 / JCM 11833 / OCM 88) (Methanosarcina frisia)).